We begin with the raw amino-acid sequence, 210 residues long: MLDAIRKNGVTLAVFAAITTGLTAVINAVTKPTIEHQTAVQQKILLDQVVPPELYNNRIQDECYSVTDPALGNTNPHHLYLARKDDKPVAVALETTAPDGYSGNIQMIVGASFDGIVYGTRVVEHHETPGLGDKIELRISDWINSFNGKKVNGPSDGHFAVKKDGGDFDQFTGATITPRAVVNAVKRTTLYIETLPGQLSSLPTCGDANE.

Residues 9–29 traverse the membrane as a helical segment; the sequence is GVTLAVFAAITTGLTAVINAV. Thr-175 bears the FMN phosphoryl threonine mark.

Belongs to the RnfG family. In terms of assembly, the complex is composed of six subunits: RnfA, RnfB, RnfC, RnfD, RnfE and RnfG. FMN is required as a cofactor.

The protein resides in the cell inner membrane. Its function is as follows. Part of a membrane-bound complex that couples electron transfer with translocation of ions across the membrane. The sequence is that of Ion-translocating oxidoreductase complex subunit G from Erwinia tasmaniensis (strain DSM 17950 / CFBP 7177 / CIP 109463 / NCPPB 4357 / Et1/99).